Consider the following 56-residue polypeptide: Male determiner protein Yob (56 aa).

Its function is as follows. Male determiner protein (M-factor) that controls male somatic sexual differentiation. Acts as a dominant factor that regulates the mRNA splicing of doublesex (dsx) transcripts and promotes expression of male splice forms of dsx. In Anopheles gambiae (African malaria mosquito), this protein is Male determiner protein Yob.